The chain runs to 275 residues: NH(3)-dependent NAD(+) synthetase (275 aa).

Position 50–57 (50–57) interacts with ATP; it reads GISGGVDS. Position 56 (aspartate 56) interacts with Mg(2+). Arginine 147 serves as a coordination point for deamido-NAD(+). Threonine 167 lines the ATP pocket. Glutamate 172 is a Mg(2+) binding site. The deamido-NAD(+) site is built by lysine 180 and aspartate 187. ATP contacts are provided by lysine 196 and threonine 218. 267–268 is a binding site for deamido-NAD(+); sequence HK.

The protein belongs to the NAD synthetase family. As to quaternary structure, homodimer.

It carries out the reaction deamido-NAD(+) + NH4(+) + ATP = AMP + diphosphate + NAD(+) + H(+). It participates in cofactor biosynthesis; NAD(+) biosynthesis; NAD(+) from deamido-NAD(+) (ammonia route): step 1/1. Catalyzes the ATP-dependent amidation of deamido-NAD to form NAD. Uses ammonia as a nitrogen source. In Pseudomonas syringae pv. syringae (strain B728a), this protein is NH(3)-dependent NAD(+) synthetase.